The chain runs to 431 residues: tRNA(Ile)-lysidine synthase (431 aa).

Position 19 to 24 (19 to 24 (STGIDS)) interacts with ATP.

Belongs to the tRNA(Ile)-lysidine synthase family.

It is found in the cytoplasm. It catalyses the reaction cytidine(34) in tRNA(Ile2) + L-lysine + ATP = lysidine(34) in tRNA(Ile2) + AMP + diphosphate + H(+). Functionally, ligates lysine onto the cytidine present at position 34 of the AUA codon-specific tRNA(Ile) that contains the anticodon CAU, in an ATP-dependent manner. Cytidine is converted to lysidine, thus changing the amino acid specificity of the tRNA from methionine to isoleucine. This is tRNA(Ile)-lysidine synthase from Staphylococcus aureus (strain MW2).